The sequence spans 359 residues: 5-amino-6-(D-ribitylamino)uracil--L-tyrosine 4-hydroxyphenyl transferase (359 aa).

Positions Val45–Lys282 constitute a Radical SAM core domain. Residues Cys59, Cys63, and Cys66 each contribute to the [4Fe-4S] cluster site.

The protein belongs to the radical SAM superfamily. CofH family. Consists of two subunits, CofG and CofH. [4Fe-4S] cluster is required as a cofactor.

It catalyses the reaction 5-amino-6-(D-ribitylamino)uracil + L-tyrosine + S-adenosyl-L-methionine = 5-amino-5-(4-hydroxybenzyl)-6-(D-ribitylimino)-5,6-dihydrouracil + 2-iminoacetate + 5'-deoxyadenosine + L-methionine + H(+). The protein operates within cofactor biosynthesis; coenzyme F0 biosynthesis. Functionally, catalyzes the radical-mediated synthesis of 5-amino-5-(4-hydroxybenzyl)-6-(D-ribitylimino)-5,6-dihydrouracil from 5-amino-6-(D-ribitylamino)uracil and L-tyrosine. The sequence is that of 5-amino-6-(D-ribitylamino)uracil--L-tyrosine 4-hydroxyphenyl transferase from Methanococcus maripaludis (strain C7 / ATCC BAA-1331).